A 180-amino-acid polypeptide reads, in one-letter code: MSNKYSLNDDELQLFRTSITGTKKLRQDTYTHKPLRRKIGELPAKRALQEQVDASFYFSDEFQPQLDTEGPTRYVRPGASHYELKKLRRGDYSPELFLDLHGLTQLQAKQELGALLAACRREHVYCACVMHGHGKHILKQQTPLWLAQHPDVLAFHQAPKEFGGNAALLVLVALEAPSLE.

A Smr domain is found at 98 to 173 (LDLHGLTQLQ…GNAALLVLVA (76 aa)).

The protein belongs to the SmrB family. Associates with collided ribosomes, but not with correctly translating polysomes.

In terms of biological role, acts as a ribosome collision sensor. Detects stalled/collided disomes (pairs of ribosomes where the leading ribosome is stalled and a second ribosome has collided with it) and endonucleolytically cleaves mRNA at the 5' boundary of the stalled ribosome. Stalled/collided disomes form a new interface (primarily via the 30S subunits) that binds SmrB. Cleaved mRNA becomes available for tmRNA ligation, leading to ribosomal subunit dissociation and rescue of stalled ribosomes. This Pectobacterium atrosepticum (strain SCRI 1043 / ATCC BAA-672) (Erwinia carotovora subsp. atroseptica) protein is Ribosome rescue factor SmrB.